The primary structure comprises 165 residues: Coronafacic acid dehydratase (165 aa).

Histidine 62 is an active-site residue.

Belongs to the thioester dehydratase family.

Its pathway is phytotoxin biosynthesis; coronatine biosynthesis. The protein is Coronafacic acid dehydratase (cfa2) of Pseudomonas savastanoi pv. glycinea (Pseudomonas syringae pv. glycinea).